Reading from the N-terminus, the 173-residue chain is Enhancer of split mdelta protein (173 aa).

The region spanning 15 to 72 (YRKVTKPLLERKRRARMNLYLDELKDLIVDTMDAQGEQVSKLEKADILELTVNYLKAQ) is the bHLH domain. The Orange domain occupies 93-126 (FRAGYTQAAYEVSHIFSTVPGLDLKFGTHLMKQL). A disordered region spans residues 147–173 (VNLADQKRSKSPREEDIHHGEEVWRPW). A compositionally biased stretch (basic and acidic residues) spans 151–173 (DQKRSKSPREEDIHHGEEVWRPW). The WRPW motif signature appears at 170-173 (WRPW).

Transcription repression requires formation of a complex with a corepressor protein (Groucho).

It is found in the nucleus. Transcriptional repressor of genes that require a bHLH protein for their transcription. May serve as a transcriptional regulator of the Achaete-scute complex (AS-C) genes. Contributes to the neural-epidermal lineage decision during early neurogenesis. As part of the Notch signaling pathway, required to maintain the self-renewal and identity of type II neuroblasts by regulating the expression of the transcriptional repressor erm. The protein is Enhancer of split mdelta protein of Drosophila melanogaster (Fruit fly).